The sequence spans 346 residues: S-adenosylmethionine:tRNA ribosyltransferase-isomerase (346 aa).

Belongs to the QueA family. In terms of assembly, monomer.

The protein localises to the cytoplasm. It carries out the reaction 7-aminomethyl-7-carbaguanosine(34) in tRNA + S-adenosyl-L-methionine = epoxyqueuosine(34) in tRNA + adenine + L-methionine + 2 H(+). It participates in tRNA modification; tRNA-queuosine biosynthesis. In terms of biological role, transfers and isomerizes the ribose moiety from AdoMet to the 7-aminomethyl group of 7-deazaguanine (preQ1-tRNA) to give epoxyqueuosine (oQ-tRNA). This is S-adenosylmethionine:tRNA ribosyltransferase-isomerase from Chloroherpeton thalassium (strain ATCC 35110 / GB-78).